A 290-amino-acid polypeptide reads, in one-letter code: Succinate dehydrogenase [ubiquinone] iron-sulfur subunit, mitochondrial (290 aa).

The N-terminal 38 residues, 1–38, are a transit peptide targeting the mitochondrion; that stretch reads MAAAVVGVSLRRGVPARFLRAGLRPVRGLEAVHGICRG. A 2Fe-2S ferredoxin-type domain is found at 50 to 143; that stretch reads KKFSIYRWDP…TTKIYPLPHM (94 aa). 4 residues coordinate [2Fe-2S] cluster: Cys103, Cys108, Cys111, and Cys123. The region spanning 186–216 is the 4Fe-4S ferredoxin-type domain; that stretch reads DRQKLDGLYECILCACCSTSCPSYWWNGDKY. [4Fe-4S] cluster is bound by residues Cys196, Cys199, and Cys202. Cys206 lines the [3Fe-4S] cluster pocket. An a ubiquinone-binding site is contributed by Trp211. [3Fe-4S] cluster is bound by residues Cys253 and Cys259. A [4Fe-4S] cluster-binding site is contributed by Cys263.

Belongs to the succinate dehydrogenase/fumarate reductase iron-sulfur protein family. Component of complex II composed of four subunits: the flavoprotein (FP) SDHA, iron-sulfur protein (IP) SDHB, and a cytochrome b560 composed of SDHC and SDHD. [2Fe-2S] cluster is required as a cofactor. [3Fe-4S] cluster serves as cofactor. It depends on [4Fe-4S] cluster as a cofactor.

The protein resides in the mitochondrion inner membrane. The catalysed reaction is a quinone + succinate = fumarate + a quinol. It catalyses the reaction (R)-malate + a quinone = enol-oxaloacetate + a quinol. The enzyme catalyses (S)-malate + a quinone = enol-oxaloacetate + a quinol. It functions in the pathway carbohydrate metabolism; tricarboxylic acid cycle; fumarate from succinate (eukaryal route): step 1/1. Enol-oxaloacetate inhibits the succinate dehydrogenase activity. Iron-sulfur protein (IP) subunit of the succinate dehydrogenase complex (mitochondrial respiratory chain complex II), responsible for transferring electrons from succinate to ubiquinone (coenzyme Q). SDH also oxidizes malate to the non-canonical enol form of oxaloacetate, enol-oxaloacetate. Enol-oxaloacetate, which is a potent inhibitor of the succinate dehydrogenase activity, is further isomerized into keto-oxaloacetate. This chain is Succinate dehydrogenase [ubiquinone] iron-sulfur subunit, mitochondrial (SDHB), found in Gallus gallus (Chicken).